Here is a 119-residue protein sequence, read N- to C-terminus: NADH-quinone oxidoreductase subunit A (119 aa).

3 helical membrane passes run 9–29 (VLLFILVGIGVGVVPLVLGYV), 63–83 (LVAILFILFDLEIAFLFPWAV), and 88–108 (VGMTGFVAVIVFLAILVVGFA).

The protein belongs to the complex I subunit 3 family. As to quaternary structure, NDH-1 is composed of 14 different subunits. Subunits NuoA, H, J, K, L, M, N constitute the membrane sector of the complex.

The protein resides in the cell inner membrane. The catalysed reaction is a quinone + NADH + 5 H(+)(in) = a quinol + NAD(+) + 4 H(+)(out). NDH-1 shuttles electrons from NADH, via FMN and iron-sulfur (Fe-S) centers, to quinones in the respiratory chain. The immediate electron acceptor for the enzyme in this species is believed to be ubiquinone. Couples the redox reaction to proton translocation (for every two electrons transferred, four hydrogen ions are translocated across the cytoplasmic membrane), and thus conserves the redox energy in a proton gradient. This Paracidovorax citrulli (strain AAC00-1) (Acidovorax citrulli) protein is NADH-quinone oxidoreductase subunit A.